Consider the following 317-residue polypeptide: Ribosomal RNA small subunit methyltransferase H (317 aa).

S-adenosyl-L-methionine-binding positions include Gly36–His38, Asp56, Phe80, Asp102, and Gln109.

Belongs to the methyltransferase superfamily. RsmH family.

The protein resides in the cytoplasm. The enzyme catalyses cytidine(1402) in 16S rRNA + S-adenosyl-L-methionine = N(4)-methylcytidine(1402) in 16S rRNA + S-adenosyl-L-homocysteine + H(+). Specifically methylates the N4 position of cytidine in position 1402 (C1402) of 16S rRNA. The sequence is that of Ribosomal RNA small subunit methyltransferase H from Baumannia cicadellinicola subsp. Homalodisca coagulata.